Here is a 155-residue protein sequence, read N- to C-terminus: Small ribosomal subunit protein uS7 (155 aa).

It belongs to the universal ribosomal protein uS7 family. In terms of assembly, part of the 30S ribosomal subunit. Contacts proteins S9 and S11.

One of the primary rRNA binding proteins, it binds directly to 16S rRNA where it nucleates assembly of the head domain of the 30S subunit. Is located at the subunit interface close to the decoding center, probably blocks exit of the E-site tRNA. The chain is Small ribosomal subunit protein uS7 from Xanthomonas axonopodis pv. citri (strain 306).